Here is a 198-residue protein sequence, read N- to C-terminus: Cytokinin riboside 5'-monophosphate phosphoribohydrolase (198 aa).

Substrate-binding positions include E91, 109–110 (RK), 126–132 (GVGTAEE), and T138.

The protein belongs to the LOG family.

The enzyme catalyses N(6)-(dimethylallyl)adenosine 5'-phosphate + H2O = N(6)-dimethylallyladenine + D-ribose 5-phosphate. The catalysed reaction is 9-ribosyl-trans-zeatin 5'-phosphate + H2O = trans-zeatin + D-ribose 5-phosphate. Catalyzes the hydrolytic removal of ribose 5'-monophosphate from nitrogen N6-modified adenosines, the final step of bioactive cytokinin synthesis. In Rhodococcoides fascians (Rhodococcus fascians), this protein is Cytokinin riboside 5'-monophosphate phosphoribohydrolase (fas6).